The following is a 189-amino-acid chain: Leucine repeat adapter protein 25 (189 aa).

Ser28 carries the phosphoserine modification. The tract at residues 54–82 is disordered; that stretch reads ELSRAARAPDGPRHAAGSANSGSAAGPRR. Positions 68-79 are enriched in low complexity; it reads AAGSANSGSAAG. The stretch at 86–114 is one LRR repeat; the sequence is LDSALAALRKEMVGLRQLDMSLLCQLWGL. Residues 136–175 form a disordered region; sequence SSLHSDSSYPPDAGLSDDEEPPDASLPPDPPPLTVPQTHN. Positions 159-169 are enriched in pro residues; that stretch reads ASLPPDPPPLT. Ser188 is subject to Phosphoserine.

This sequence belongs to the FAM89 family. As to quaternary structure, interacts with SKI. Interacts (via LRR repeat) with CDC42BPA (via AGC-kinase C-terminal domain), CDC42BPB (via AGC-kinase C-terminal domain) and LIMK1 (via LIM zinc-binding domains). Forms a tripartite complex with CDC42BPA, CDC42BPB and LIMK1. In terms of assembly, (Microbial infection) Interacts with mouse mammary tumor virus (MMTV) envelope glycoprotein gp70. In terms of tissue distribution, widely expressed. Expressed in the early postnatal brain.

The protein resides in the cytoplasm. The protein localises to the cell projection. Its subcellular location is the lamellipodium. It localises to the cell surface. Functionally, negatively regulates TGF-beta-induced signaling; in cooperation with SKI prevents the translocation of SMAD2 from the nucleus to the cytoplasm in response to TGF-beta. Acts as an adapter that mediates the specific recognition of LIMK1 by CDC42BPA and CDC42BPB in the lamellipodia. LRAP25-mediated CDC42BPA/CDC42BPB targeting to LIMK1 and the lamellipodium results in LIMK1 activation and the subsequent phosphorylation of CFL1 which is important for lamellipodial F-actin regulation. (Microbial infection) May be a receptor for mouse mammary tumor virus (MMTV). This Mus musculus (Mouse) protein is Leucine repeat adapter protein 25.